Reading from the N-terminus, the 265-residue chain is Tryptophan synthase alpha chain (265 aa).

Active-site proton acceptor residues include Glu-49 and Asp-60.

This sequence belongs to the TrpA family. In terms of assembly, tetramer of two alpha and two beta chains.

The enzyme catalyses (1S,2R)-1-C-(indol-3-yl)glycerol 3-phosphate + L-serine = D-glyceraldehyde 3-phosphate + L-tryptophan + H2O. It participates in amino-acid biosynthesis; L-tryptophan biosynthesis; L-tryptophan from chorismate: step 5/5. Functionally, the alpha subunit is responsible for the aldol cleavage of indoleglycerol phosphate to indole and glyceraldehyde 3-phosphate. The protein is Tryptophan synthase alpha chain of Cupriavidus taiwanensis (strain DSM 17343 / BCRC 17206 / CCUG 44338 / CIP 107171 / LMG 19424 / R1) (Ralstonia taiwanensis (strain LMG 19424)).